The sequence spans 269 residues: Putative 12-oxophytodienoate reductase-like protein 2A (269 aa).

FMN contacts are provided by residues 28–30 (PLT) and glutamine 103. Substrate is bound at residue 175–178 (HGAH). The active-site Proton donor is the tyrosine 180. An FMN-binding site is contributed by arginine 227.

The protein belongs to the NADH:flavin oxidoreductase/NADH oxidase family. FMN is required as a cofactor.

In terms of biological role, putative oxophytodienoate reductase that may be involved in the biosynthesis or metabolism of oxylipin signaling molecules. The protein is Putative 12-oxophytodienoate reductase-like protein 2A of Arabidopsis thaliana (Mouse-ear cress).